Consider the following 161-residue polypeptide: Putative pre-16S rRNA nuclease (161 aa).

The protein belongs to the YqgF nuclease family.

The protein localises to the cytoplasm. In terms of biological role, could be a nuclease involved in processing of the 5'-end of pre-16S rRNA. This chain is Putative pre-16S rRNA nuclease, found in Bradyrhizobium sp. (strain ORS 278).